An 89-amino-acid polypeptide reads, in one-letter code: Small ribosomal subunit protein uS15 (89 aa).

It belongs to the universal ribosomal protein uS15 family. As to quaternary structure, part of the 30S ribosomal subunit. Forms a bridge to the 50S subunit in the 70S ribosome, contacting the 23S rRNA.

Functionally, one of the primary rRNA binding proteins, it binds directly to 16S rRNA where it helps nucleate assembly of the platform of the 30S subunit by binding and bridging several RNA helices of the 16S rRNA. In terms of biological role, forms an intersubunit bridge (bridge B4) with the 23S rRNA of the 50S subunit in the ribosome. The protein is Small ribosomal subunit protein uS15 of Staphylococcus carnosus (strain TM300).